Consider the following 260-residue polypeptide: Type III pantothenate kinase (260 aa).

6-13 contributes to the ATP binding site; it reads DAGNTNIV. 108 to 111 lines the substrate pocket; that stretch reads GADR. The Proton acceptor role is filled by Asp-110. Asp-130 contacts K(+). Thr-133 serves as a coordination point for ATP. A substrate-binding site is contributed by Thr-187.

The protein belongs to the type III pantothenate kinase family. Homodimer. NH4(+) serves as cofactor. The cofactor is K(+).

It localises to the cytoplasm. The catalysed reaction is (R)-pantothenate + ATP = (R)-4'-phosphopantothenate + ADP + H(+). The protein operates within cofactor biosynthesis; coenzyme A biosynthesis; CoA from (R)-pantothenate: step 1/5. Catalyzes the phosphorylation of pantothenate (Pan), the first step in CoA biosynthesis. This Rhizorhabdus wittichii (strain DSM 6014 / CCUG 31198 / JCM 15750 / NBRC 105917 / EY 4224 / RW1) (Sphingomonas wittichii) protein is Type III pantothenate kinase.